A 1095-amino-acid chain; its full sequence is Solute carrier family 12 member 1 (1095 aa).

Over 1–173 the chain is Cytoplasmic; sequence MSVNIPSNSV…EEDVTGVVKF (173 aa). The RFXV motif signature appears at 16–19; that stretch reads RFQV. Residues 26–45 form a disordered region; it reads HGSGAAMSDSTDPPHYEETS. Phosphoserine is present on residues Ser-57 and Ser-87. Thr-91, Thr-96, Thr-101, and Thr-114 each carry phosphothreonine. A Phosphoserine modification is found at Ser-116. The residue at position 126 (Ser-126) is a Phosphoserine; by AMPK. Ser-144 is subject to Phosphoserine. A helical membrane pass occupies residues 174–194; sequence GWVKGVLVRCMLNIWGVMLFI. Topologically, residues 195 to 197 are extracellular; that stretch reads RLS. A helical transmembrane segment spans residues 198-218; the sequence is WIVGEAGIGLGVIIIGLSVVV. Residues 219–255 are Cytoplasmic-facing; sequence TTLTGISMSAICTNGVVRGGGAYYLISRSLGPEFGGS. The helical transmembrane segment at 256 to 276 threads the bilayer; sequence IGLIFRFANAVRVAMYVVGFA. The Extracellular portion of the chain corresponds to 277–298; the sequence is ETVVDLLKESDSMMVDPTNDIR. A helical membrane pass occupies residues 299–319; that stretch reads IIGSITVVILLGISVAGMEWE. At 320-323 the chain is on the cytoplasmic side; it reads AKAQ. A helical membrane pass occupies residues 324–344; sequence VILLVILLIGIANFFIGTVIP. Residues 345–375 are Extracellular-facing; the sequence is SNNEKKSRGFFNYQASIFAENFGPSFTEGEG. A helical transmembrane segment spans residues 376-396; sequence FFSVFAIFFPAATGILAGANI. At 397 to 413 the chain is on the cytoplasmic side; the sequence is SGDLEDPQDAIPRGTML. A helical transmembrane segment spans residues 414 to 434; it reads AIFITTVAYIGVAICVRACVV. Residues 435–546 lie on the Extracellular side of the membrane; that stretch reads RDATGSMNDT…NNEPLRGYFL (112 aa). Asn-442 and Asn-452 each carry an N-linked (GlcNAc...) asparagine glycan. 2 helical membrane-spanning segments follow: residues 547 to 567 and 568 to 588; these read TFVIAMAFILIAELNVIAPII and SNFFLASYALINFSCFHASYA. The Extracellular segment spans residues 589–605; sequence KSPGWRPAYGIYNMWVS. A helical membrane pass occupies residues 606–626; that stretch reads LFGAILCCAVMFVINWWAAVI. Residues 627-1095 are Cytoplasmic-facing; sequence TYVIELFLYI…NHKNVLTFYS (469 aa).

This sequence belongs to the SLC12A transporter family. As to quaternary structure, when phosphorylated, interacts with PPP3CB. Post-translationally, phosphorylated at Ser-87, Thr-96 and Thr-101 by OXSR1/OSR1 and STK39/SPAK downstream of WNK kinases (WNK1, WNK2, WNK3 or WNK4), promoting its activity. In terms of tissue distribution, expressed predominantly in kidney (at protein level).

It is found in the apical cell membrane. It catalyses the reaction K(+)(out) + 2 chloride(out) + Na(+)(out) = K(+)(in) + 2 chloride(in) + Na(+)(in). With respect to regulation, activated following phosphorylation by OXSR1/OSR1 and STK39/SPAK downstream of WNK kinases (WNK1, WNK2, WNK3 or WNK4). Renal sodium, potassium and chloride ion cotransporter that mediates the transepithelial NaCl reabsorption in the thick ascending limb and plays an essential role in the urinary concentration and volume regulation. Electrically silent transporter system. The chain is Solute carrier family 12 member 1 (Slc12a1) from Rattus norvegicus (Rat).